The primary structure comprises 432 residues: Trigger factor (432 aa).

Positions 161-246 (GKRVSIDFVG…VNKVEARQLP (86 aa)) constitute a PPIase FKBP-type domain.

It belongs to the FKBP-type PPIase family. Tig subfamily.

Its subcellular location is the cytoplasm. The enzyme catalyses [protein]-peptidylproline (omega=180) = [protein]-peptidylproline (omega=0). In terms of biological role, involved in protein export. Acts as a chaperone by maintaining the newly synthesized protein in an open conformation. Functions as a peptidyl-prolyl cis-trans isomerase. This chain is Trigger factor, found in Vibrio vulnificus (strain CMCP6).